A 286-amino-acid polypeptide reads, in one-letter code: Beta-lactamase SHV-2 (286 aa).

The first 21 residues, 1–21 (MRYIRLCIISLLATLPLAVHA), serve as a signal peptide directing secretion. The Acyl-ester intermediate role is filled by Ser-66. Residues Cys-73 and Cys-119 are joined by a disulfide bond. Glu-164 serves as the catalytic Proton acceptor. Substrate is bound at residue 230–232 (KTG).

The protein belongs to the class-A beta-lactamase family.

The catalysed reaction is a beta-lactam + H2O = a substituted beta-amino acid. In terms of biological role, this enzyme hydrolyzes cefotaxime, ceftazidime and other broad spectrum cephalosporins. This Klebsiella pneumoniae protein is Beta-lactamase SHV-2 (bla).